Consider the following 943-residue polypeptide: Translation initiation factor IF-2 (943 aa).

Positions 99–113 (VKAAQTQAAPVQPEQ) are enriched in low complexity. A disordered region spans residues 99–354 (VKAAQTQAAP…LEPNQHAFQA (256 aa)). Residues 117–141 (DAVKARAEAAARAEARAKAEAEAAK) are compositionally biased toward basic and acidic residues. Residues 145–172 (AKAGNKAKPAAQKPTEAKAETAPVAAET) are compositionally biased toward low complexity. The segment covering 173–197 (KPAEPKEKAVKPKHERNGKGKDAKK) has biased composition (basic and acidic residues). Residues 200-215 (KPAAPAVPQPVVSAEE) show a composition bias toward low complexity. Over residues 216–250 (QAQRDEEARRAAALRAHQEALLKEKQERQARREAM) the composition is skewed to basic and acidic residues. Residues 251 to 264 (KQQAEQQAKAAQEA) show a composition bias toward low complexity. 2 stretches are compositionally biased toward basic and acidic residues: residues 295 to 308 (AKKE…DEGQ) and 319 to 335 (GGRD…ERVR). A tr-type G domain is found at 443-612 (PRPPVVTVMG…LLEAEVLELT (170 aa)). The segment at 452–459 (GHVDHGKT) is G1. 452–459 (GHVDHGKT) provides a ligand contact to GTP. The interval 477 to 481 (GITQH) is G2. Residues 498 to 501 (DTPG) are G3. GTP-binding positions include 498–502 (DTPGH) and 552–555 (NKID). The segment at 552–555 (NKID) is G4. The segment at 588–590 (SAK) is G5.

This sequence belongs to the TRAFAC class translation factor GTPase superfamily. Classic translation factor GTPase family. IF-2 subfamily.

It is found in the cytoplasm. One of the essential components for the initiation of protein synthesis. Protects formylmethionyl-tRNA from spontaneous hydrolysis and promotes its binding to the 30S ribosomal subunits. Also involved in the hydrolysis of GTP during the formation of the 70S ribosomal complex. In Neisseria gonorrhoeae (strain ATCC 700825 / FA 1090), this protein is Translation initiation factor IF-2.